The following is a 90-amino-acid chain: Co-chaperonin GroES (90 aa).

Belongs to the GroES chaperonin family. As to quaternary structure, heptamer of 7 subunits arranged in a ring. Interacts with the chaperonin GroEL.

Its subcellular location is the cytoplasm. Functionally, together with the chaperonin GroEL, plays an essential role in assisting protein folding. The GroEL-GroES system forms a nano-cage that allows encapsulation of the non-native substrate proteins and provides a physical environment optimized to promote and accelerate protein folding. GroES binds to the apical surface of the GroEL ring, thereby capping the opening of the GroEL channel. The chain is Co-chaperonin GroES from Thermosipho melanesiensis (strain DSM 12029 / CIP 104789 / BI429).